The sequence spans 48 residues: uncharacterized protein (48 aa).

This is an uncharacterized protein from Methanocaldococcus jannaschii (strain ATCC 43067 / DSM 2661 / JAL-1 / JCM 10045 / NBRC 100440) (Methanococcus jannaschii).